Consider the following 357-residue polypeptide: Protein RecA (357 aa).

Residue 69 to 76 (GPESSGKT) coordinates ATP. Residues 337 to 357 (SANSVAKNNEDDEDEDVEEEE) are disordered. Over residues 346–357 (EDDEDEDVEEEE) the composition is skewed to acidic residues.

This sequence belongs to the RecA family.

It localises to the cytoplasm. Functionally, can catalyze the hydrolysis of ATP in the presence of single-stranded DNA, the ATP-dependent uptake of single-stranded DNA by duplex DNA, and the ATP-dependent hybridization of homologous single-stranded DNAs. It interacts with LexA causing its activation and leading to its autocatalytic cleavage. The sequence is that of Protein RecA from Nostoc sp. (strain PCC 7120 / SAG 25.82 / UTEX 2576).